The primary structure comprises 179 residues: Adenine phosphoribosyltransferase (179 aa).

This sequence belongs to the purine/pyrimidine phosphoribosyltransferase family. In terms of assembly, homodimer.

It localises to the cytoplasm. It catalyses the reaction AMP + diphosphate = 5-phospho-alpha-D-ribose 1-diphosphate + adenine. Its pathway is purine metabolism; AMP biosynthesis via salvage pathway; AMP from adenine: step 1/1. Catalyzes a salvage reaction resulting in the formation of AMP, that is energically less costly than de novo synthesis. The chain is Adenine phosphoribosyltransferase from Haemophilus ducreyi (strain 35000HP / ATCC 700724).